Reading from the N-terminus, the 566-residue chain is Amino acid transporter 6-1 (566 aa).

The next 11 membrane-spanning stretches (helical) occupy residues Tyr65 to Trp85, Met137 to Gly157, Pro158 to Phe178, Tyr187 to Ile207, Gly216 to Leu236, Val250 to Met270, Phe334 to Ser354, Asp367 to Gly387, Val392 to Phe412, Leu423 to Val443, and Leu455 to Glu475. N-linked (GlcNAc...) asparagine glycosylation occurs at Asn476. A helical membrane pass occupies residues Ile489 to Phe509.

This sequence belongs to the SLC43A transporter (TC 2.A.1.44) family.

Its subcellular location is the cell membrane. The enzyme catalyses L-lysine(in) = L-lysine(out). It catalyses the reaction L-arginine(in) = L-arginine(out). The catalysed reaction is L-methionine(in) = L-methionine(out). It carries out the reaction L-leucine(in) = L-leucine(out). Functionally, cationic and neutral amino acid transporter. Transports lysine with high affinity. Can transport arginine, methionine and leucine. Does not require inorganic ions, such as sodium, chloride, potassium, calcium or magnesium, for transport activity. The polypeptide is Amino acid transporter 6-1 (Toxoplasma gondii (strain ATCC 50611 / Me49)).